The primary structure comprises 62 residues: MSERQGAGTTNGKDKPSGENDGQKKVQEEFDIDMDAPETERAAVAIQSQFRKFQKKKAGSQS.

Positions 1 to 40 (MSERQGAGTTNGKDKPSGENDGQKKVQEEFDIDMDAPETE) are disordered. Basic and acidic residues predominate over residues 12–28 (GKDKPSGENDGQKKVQE). Residues 28-40 (EEFDIDMDAPETE) form an acidic; binds calcium and is required for modulating the calcium-binding kinetics of calmodulin region. An IQ domain is found at 39-62 (TERAAVAIQSQFRKFQKKKAGSQS).

Belongs to the PCP4 family. In terms of assembly, binds to both calcium-free and calcium-bound calmodulin. The affinity for the calcium-bound form is 50-fold greater.

Functionally, functions as a modulator of calcium-binding by calmodulin. Thereby, regulates calmodulin activity and the different processes it controls. For instance, may play a role in neuronal differentiation through activation of calmodulin-dependent kinase signaling pathways. This is Calmodulin regulator protein PCP4 from Bos taurus (Bovine).